A 192-amino-acid polypeptide reads, in one-letter code: Ion-translocating oxidoreductase complex subunit B (192 aa).

Residues 1–26 (MNAIWIAVAAVSLLGLAFGAILGYAS) form a hydrophobic region. A 4Fe-4S domain is found at 32-91 (EDDPVVEKIDEILPQSQCGQCGYPGCRPYAEAISCNGEKINRCAPGGEAVMLKIAELLNV). Cysteine 49, cysteine 52, cysteine 57, cysteine 74, cysteine 117, cysteine 120, cysteine 123, cysteine 127, cysteine 147, cysteine 150, cysteine 153, and cysteine 157 together coordinate [4Fe-4S] cluster. 4Fe-4S ferredoxin-type domains are found at residues 108–137 (MVAV…GATR) and 138–167 (AMHT…LQPV).

It belongs to the 4Fe4S bacterial-type ferredoxin family. RnfB subfamily. As to quaternary structure, the complex is composed of six subunits: RsxA, RsxB, RsxC, RsxD, RsxE and RsxG. Requires [4Fe-4S] cluster as cofactor.

Its subcellular location is the cell inner membrane. In terms of biological role, part of a membrane-bound complex that couples electron transfer with translocation of ions across the membrane. Required to maintain the reduced state of SoxR. This chain is Ion-translocating oxidoreductase complex subunit B, found in Escherichia coli O8 (strain IAI1).